The primary structure comprises 375 residues: DNA replication and repair protein RecF (375 aa).

30–37 is a binding site for ATP; it reads GENAQGKT.

It belongs to the RecF family.

It localises to the cytoplasm. Its function is as follows. The RecF protein is involved in DNA metabolism; it is required for DNA replication and normal SOS inducibility. RecF binds preferentially to single-stranded, linear DNA. It also seems to bind ATP. The chain is DNA replication and repair protein RecF from Bacillus cereus (strain ZK / E33L).